Consider the following 873-residue polypeptide: DNA helicase/primase complex-associated protein (873 aa).

The segment at 394-422 (PPLPRDDGDGENNVVEVSSSTGGAHPPSD) is disordered.

Belongs to the herpesviridae HEPA family. In terms of assembly, associates with the primase and the helicase to form the helicase-primase complex. Interacts with the origin-binding protein. Interacts with the polymerase catalytic subunit.

It is found in the host nucleus. Functionally, component of the helicase/primase complex. Unwinds the DNA at the replication forks and generates single-stranded DNA for both leading and lagging strand synthesis. The primase synthesizes short RNA primers on the lagging strand that the polymerase presumably elongates using dNTPs. The primase-associated factor has no known catalytic activity in the complex and may serve to facilitate the formation of the replisome by directly interacting with the origin-binding protein and the polymerase. This chain is DNA helicase/primase complex-associated protein (UL102), found in Human cytomegalovirus (strain Merlin) (HHV-5).